A 1214-amino-acid chain; its full sequence is Transient receptor potential cation channel subfamily M member 4 (1214 aa).

The Cytoplasmic segment spans residues 1–782 (MVVPEKEQSW…FHFWGAPVTI (782 aa)). Residues R171, R214, and L225 each contribute to the ATP site. Ca(2+) is bound by residues D270, A392, D395, and E396. 2 residues coordinate ATP: R421 and G448. The helical transmembrane segment at 783–803 (FMGNVVSYLLFLLLFSRVLLV) threads the bilayer. The Extracellular portion of the chain corresponds to 804–814 (DFQPAPPGSLE). Residues 815–835 (LLLYFWAFTLLCEELRQGLSG) traverse the membrane as a helical segment. E828 and Q831 together coordinate Ca(2+). The Cytoplasmic segment spans residues 836–863 (GGGSLASGGPGPGHASLSQRLRLYLADS). Residues 864–884 (WNQCDLVALTCFLLGVGCRLT) form a helical membrane-spanning segment. Residues N865 and D868 each contribute to the Ca(2+) site. The Extracellular portion of the chain corresponds to 885-886 (PG). The chain crosses the membrane as a helical span at residues 887–910 (LYHLGRTVLCIDFMVFTVRLLHIF). The Cytoplasmic segment spans residues 911 to 930 (TVNKQLGPKIVIVSKMMKDV). Residues 931 to 951 (FFFLFFLGVWLVAYGVATEGL) form a helical membrane-spanning segment. At 952 to 963 (LRPRDSDFPSIL) the chain is on the extracellular side. The segment at residues 964–984 (RRVFYRPYLQIFGQIPQEDMD) is an intramembrane region (pore-forming). Residues 975-977 (FGQ) carry the Selectivity filter motif. Topologically, residues 985–1019 (VALMEHSNCSSEPGFWAHPPGAQAGTCVSQYANWL) are extracellular. The N-linked (GlcNAc...) asparagine glycan is linked to N992. A disulfide bridge links C993 with C1011. The helical transmembrane segment at 1020–1040 (VVLLLVIFLLVANILLVNLLI) threads the bilayer. Residues 1041 to 1214 (AMFSYTFGKV…PPPDLPGSKD (174 aa)) are Cytoplasmic-facing. The calmodulin-binding stretch occupies residues 1076 to 1176 (APPFIVISHL…EYEQRLKVLE (101 aa)). Residues 1134–1187 (LARARDKRESDSERLKRTSQKVDLALKQLGHIREYEQRLKVLEREVQQCSRVLG) are a coiled coil. Residues 1136–1141 (RARDKR) form a mediates modulation by decavanadate and PIP2-binding region. 2 positions are modified to phosphoserine; by PKC: S1145 and S1152.

Belongs to the transient receptor (TC 1.A.4) family. LTrpC subfamily. TRPM4 sub-subfamily. In terms of assembly, homotetramer. Phosphorylation by PKC leads to increase the sensitivity to Ca(2+). In terms of processing, sumoylated. Desumoylated by SENP1. Widely expressed with a high expression in intestine and prostate. In brain, it is both expressed in whole cerebral arteries and isolated vascular smooth muscle cells. Prominently expressed in Purkinje fibers. Expressed at higher levels in T-helper 2 (Th2) cells as compared to T-helper 1 (Th1) cells. Expressed in keratocytes.

The protein resides in the cell membrane. The protein localises to the endoplasmic reticulum. It is found in the golgi apparatus. It catalyses the reaction Na(+)(in) = Na(+)(out). The catalysed reaction is K(+)(in) = K(+)(out). With respect to regulation, displays weak voltage dependence, and repressed by decavanadate. Calmodulin-binding confers the Ca(2+) sensitivity. ATP is able to restore Ca(2+) sensitivity after desensitization. ATP inhibits channel activity. Phosphatidylinositol 4,5-bisphosphate (PIP2)-binding strongly enhances activity, by increasing the channel's Ca(2+) sensitivity and shifting its voltage dependence of activation towards negative potentials. Activity is also enhanced by 3,5-bis(trifluoromethyl)pyrazole derivative (BTP2). Exhibits pronounced temperature sensitivity, with activities strongly intensifying near physiological temperatures. In terms of biological role, calcium-activated selective cation channel that mediates membrane depolarization. While it is activated by increase in intracellular Ca(2+), it is impermeable to it. Mediates transport of monovalent cations (Na(+) &gt; K(+) &gt; Cs(+) &gt; Li(+)), leading to depolarize the membrane. It thereby plays a central role in cadiomyocytes, neurons from entorhinal cortex, dorsal root and vomeronasal neurons, endocrine pancreas cells, kidney epithelial cells, cochlea hair cells etc. Participates in T-cell activation by modulating Ca(2+) oscillations after T lymphocyte activation, which is required for NFAT-dependent IL2 production. Involved in myogenic constriction of cerebral arteries. Controls insulin secretion in pancreatic beta-cells. May also be involved in pacemaking or could cause irregular electrical activity under conditions of Ca(2+) overload. Affects T-helper 1 (Th1) and T-helper 2 (Th2) cell motility and cytokine production through differential regulation of calcium signaling and NFATC1 localization. Enhances cell proliferation through up-regulation of the beta-catenin signaling pathway. Plays a role in keratinocyte differentiation. Lacks channel activity. The chain is Transient receptor potential cation channel subfamily M member 4 from Homo sapiens (Human).